The sequence spans 229 residues: Probable transmembrane reductase CYB561D1 (229 aa).

Residues 1–24 lie on the Cytoplasmic side of the membrane; that stretch reads MHSMEVGLVPAPAREPRLTRWLRR. The region spanning 22–224 is the Cytochrome b561 domain; that stretch reads LRRGSGILAH…HQISSSYLPR (203 aa). Residues 25-45 traverse the membrane as a helical segment; that stretch reads GSGILAHLIALGFTIFLTVLS. Residues 46-53 lie on the Lumenal side of the membrane; that stretch reads RPGTSLFS. A helical transmembrane segment spans residues 54 to 74; that stretch reads WHPVFMALAFCLCMAEAILLF. H55 is a heme b binding site. Residues 75-91 are Cytoplasmic-facing; that stretch reads SPEHSLFFFCSRKTRIR. A helical membrane pass occupies residues 92–112; that stretch reads LHWAGQTMAILCAVLGLGFII. Residues H93 and H127 each contribute to the heme b site. Residues 113-128 lie on the Lumenal side of the membrane; the sequence is SSKIRSEMSHLVSWHS. A helical membrane pass occupies residues 129–149; it reads WIGALTLLATGGQALCGLCLL. Residues 150 to 169 are Cytoplasmic-facing; sequence CPRAARVSRVARLKLYHLTC. A heme b-binding site is contributed by H166. A helical membrane pass occupies residues 170-190; the sequence is GLVVYLMATVTVLLGMYSVWF. At 191 to 193 the chain is on the lumenal side; the sequence is QAQ. The helical transmembrane segment at 194–214 threads the bilayer; that stretch reads IKGTAWYLCLGLPLYPALVIM. Residues 215-229 are Cytoplasmic-facing; that stretch reads HQISSSYLPRKKVEI.

Heme b is required as a cofactor.

The protein localises to the membrane. It carries out the reaction monodehydro-L-ascorbate radical(out) + L-ascorbate(in) = monodehydro-L-ascorbate radical(in) + L-ascorbate(out). It catalyses the reaction Fe(3+)(out) + L-ascorbate(in) = monodehydro-L-ascorbate radical(in) + Fe(2+)(out) + H(+). In terms of biological role, probable transmembrane reductase that may use ascorbate as an electron donor and transfer electrons across membranes to reduce monodehydro-L-ascorbate radical and iron cations Fe(3+) in another cellular compartment. The polypeptide is Probable transmembrane reductase CYB561D1 (Mus musculus (Mouse)).